The following is a 239-amino-acid chain: Ribosomal RNA small subunit methyltransferase G (239 aa).

S-adenosyl-L-methionine-binding positions include Gly-77, Phe-82, 128 to 129 (AE), and Arg-147. The tract at residues 216 to 239 (KKQSQTPKKFPRKPGTPNKSPIEG) is disordered.

This sequence belongs to the methyltransferase superfamily. RNA methyltransferase RsmG family.

It localises to the cytoplasm. In terms of biological role, specifically methylates the N7 position of guanine in position 535 of 16S rRNA. This is Ribosomal RNA small subunit methyltransferase G from Bacillus licheniformis (strain ATCC 14580 / DSM 13 / JCM 2505 / CCUG 7422 / NBRC 12200 / NCIMB 9375 / NCTC 10341 / NRRL NRS-1264 / Gibson 46).